The following is a 250-amino-acid chain: Small ribosomal subunit protein uS3 (250 aa).

A KH type-2 domain is found at 39–107 (VRAALKKRLY…EVHLNIVEIR (69 aa)). Residues 215–250 (LDKRLATESGPAGEGGGRERGDRPDRGDRRDRRDRA) form a disordered region. The segment covering 230 to 250 (GGRERGDRPDRGDRRDRRDRA) has biased composition (basic and acidic residues).

This sequence belongs to the universal ribosomal protein uS3 family. Part of the 30S ribosomal subunit. Forms a tight complex with proteins S10 and S14.

Its function is as follows. Binds the lower part of the 30S subunit head. Binds mRNA in the 70S ribosome, positioning it for translation. This Caulobacter vibrioides (strain ATCC 19089 / CIP 103742 / CB 15) (Caulobacter crescentus) protein is Small ribosomal subunit protein uS3.